The primary structure comprises 308 residues: Bacitracin transport ATP-binding protein BcrA (308 aa).

One can recognise an ABC transporter domain in the interval 8–236 (IETENLTKQY…NRKYTEFDVS (229 aa)). ATP is bound at residue 40-47 (GRNGAGKT).

The protein belongs to the ABC transporter superfamily. As to quaternary structure, the complex is probably composed of two ATP-binding proteins (BcrA) and two transmembrane proteins (BcrB).

Functionally, essential for high-level bacitracin resistance. Part of the ABC transporter complex BcrAB. Probably responsible for energy coupling to the transport system. In Enterococcus faecalis (Streptococcus faecalis), this protein is Bacitracin transport ATP-binding protein BcrA.